A 227-amino-acid polypeptide reads, in one-letter code: ATP-dependent dethiobiotin synthetase BioD (227 aa).

13 to 18 is a binding site for ATP; it reads DIGKTY. Thr17 is a Mg(2+) binding site. Lys38 is a catalytic residue. Ser42 serves as a coordination point for substrate. ATP contacts are provided by residues Asp55, 116 to 119, and 179 to 180; these read EGSG and NN. Mg(2+) contacts are provided by Asp55 and Glu116.

Belongs to the dethiobiotin synthetase family. Homodimer. Mg(2+) serves as cofactor.

Its subcellular location is the cytoplasm. It carries out the reaction (7R,8S)-7,8-diammoniononanoate + CO2 + ATP = (4R,5S)-dethiobiotin + ADP + phosphate + 3 H(+). It functions in the pathway cofactor biosynthesis; biotin biosynthesis; biotin from 7,8-diaminononanoate: step 1/2. Functionally, catalyzes a mechanistically unusual reaction, the ATP-dependent insertion of CO2 between the N7 and N8 nitrogen atoms of 7,8-diaminopelargonic acid (DAPA, also called 7,8-diammoniononanoate) to form a ureido ring. In Clostridium botulinum (strain ATCC 19397 / Type A), this protein is ATP-dependent dethiobiotin synthetase BioD.